A 205-amino-acid chain; its full sequence is Rho GDP-dissociation inhibitor (205 aa).

The segment covering 1 to 11 (MSVNNEVSADQ) has biased composition (polar residues). Residues 1–31 (MSVNNEVSADQHNPELEDDTFEHGPPVSLGE) are disordered. Ser63 carries the post-translational modification Phosphoserine.

The protein belongs to the Rho GDI family.

It is found in the cytoplasm. The protein localises to the nucleus. Functionally, regulates the GDP/GTP exchange reaction of the Rho proteins by inhibiting the dissociation of GDP from them, and the subsequent binding of GTP to them. The sequence is that of Rho GDP-dissociation inhibitor from Schizosaccharomyces pombe (strain 972 / ATCC 24843) (Fission yeast).